The primary structure comprises 213 residues: Large ribosomal subunit protein uL3 (213 aa).

Glutamine 151 bears the N5-methylglutamine mark.

This sequence belongs to the universal ribosomal protein uL3 family. Part of the 50S ribosomal subunit. Forms a cluster with proteins L14 and L19. In terms of processing, methylated by PrmB.

Functionally, one of the primary rRNA binding proteins, it binds directly near the 3'-end of the 23S rRNA, where it nucleates assembly of the 50S subunit. The polypeptide is Large ribosomal subunit protein uL3 (Rhizobium etli (strain ATCC 51251 / DSM 11541 / JCM 21823 / NBRC 15573 / CFN 42)).